The sequence spans 329 residues: MTQLFYDTDADLSLLKNKTIAIIGYGSQGHAHALNLKDSGMDVIVGLYKGSNSESKAINDGLKVFTVSEACEKADWIMILLPDEFQKDVYIKEIEPNLKEGKILSFAHGFNIRFELIKPPNFVDVVMIAPKGPGHTVRWEYQNGQGVPALFAVEQDYSGNARSLAMSYAKGIGGTRAGILETNFKEETETDLFGEQAVLCGGLSELVKSGFETLVEAGYQPELAYFECLHEVKLIVDLMVKGGLSQMRDSISNTAEYGDYVSGKRLINNETKKEMQKILKDIQDGTFAKNFVDECDNNKPLMTKLREENSKHEIEKVGKGLRAMFSWLK.

The 181-residue stretch at 2–182 (TQLFYDTDAD…GGTRAGILET (181 aa)) folds into the KARI N-terminal Rossmann domain. Residues 25 to 28 (YGSQ), serine 51, serine 53, and 83 to 86 (DEFQ) contribute to the NADP(+) site. Histidine 108 is an active-site residue. NADP(+) is bound at residue glycine 134. The region spanning 183–328 (NFKEETETDL…KGLRAMFSWL (146 aa)) is the KARI C-terminal knotted domain. Residues aspartate 191, glutamate 195, glutamate 227, and glutamate 231 each coordinate Mg(2+). Position 252 (serine 252) interacts with substrate.

Belongs to the ketol-acid reductoisomerase family. It depends on Mg(2+) as a cofactor.

The catalysed reaction is (2R)-2,3-dihydroxy-3-methylbutanoate + NADP(+) = (2S)-2-acetolactate + NADPH + H(+). It catalyses the reaction (2R,3R)-2,3-dihydroxy-3-methylpentanoate + NADP(+) = (S)-2-ethyl-2-hydroxy-3-oxobutanoate + NADPH + H(+). It participates in amino-acid biosynthesis; L-isoleucine biosynthesis; L-isoleucine from 2-oxobutanoate: step 2/4. It functions in the pathway amino-acid biosynthesis; L-valine biosynthesis; L-valine from pyruvate: step 2/4. In terms of biological role, involved in the biosynthesis of branched-chain amino acids (BCAA). Catalyzes an alkyl-migration followed by a ketol-acid reduction of (S)-2-acetolactate (S2AL) to yield (R)-2,3-dihydroxy-isovalerate. In the isomerase reaction, S2AL is rearranged via a Mg-dependent methyl migration to produce 3-hydroxy-3-methyl-2-ketobutyrate (HMKB). In the reductase reaction, this 2-ketoacid undergoes a metal-dependent reduction by NADPH to yield (R)-2,3-dihydroxy-isovalerate. The protein is Ketol-acid reductoisomerase (NADP(+)) of Prochlorococcus marinus subsp. pastoris (strain CCMP1986 / NIES-2087 / MED4).